We begin with the raw amino-acid sequence, 391 residues long: tRNA(Met) cytidine acetate ligase (391 aa).

ATP-binding positions include 7–20, Gly101, Asn153, and Arg178; that span reads IAEY…HIYQ.

This sequence belongs to the TmcAL family.

It localises to the cytoplasm. The enzyme catalyses cytidine(34) in elongator tRNA(Met) + acetate + ATP = N(4)-acetylcytidine(34) in elongator tRNA(Met) + AMP + diphosphate. Catalyzes the formation of N(4)-acetylcytidine (ac(4)C) at the wobble position of elongator tRNA(Met), using acetate and ATP as substrates. First activates an acetate ion to form acetyladenylate (Ac-AMP) and then transfers the acetyl group to tRNA to form ac(4)C34. The protein is tRNA(Met) cytidine acetate ligase of Latilactobacillus sakei subsp. sakei (strain 23K) (Lactobacillus sakei subsp. sakei).